A 155-amino-acid chain; its full sequence is Microsomal glutathione S-transferase 1 (155 aa).

The Lumenal portion of the chain corresponds to 3–9 (DLRQLMD). A helical membrane pass occupies residues 10-33 (NEVLMAFTSYATIILTKMMFMSSA). The Cytoplasmic portion of the chain corresponds to 34–62 (TAFQRITNKVFANPEDCAGFGKGENAKKF). Arginine 38 serves as a coordination point for glutathione. Lysine 42, lysine 55, and lysine 60 each carry N6-acetyllysine. The chain crosses the membrane as a helical span at residues 63–96 (VRTDEKVERVRRAHLNDLENIVPFLGIGLLYSLS). Positions 73, 74, 76, and 81 each coordinate glutathione. Over 97–99 (GPD) the chain is Lumenal. The chain crosses the membrane as a helical span at residues 100 to 123 (LSTALMHFRIFVGARIYHTIAYLT). Tyrosine 121 contacts glutathione. Residues 124–128 (PLPQP) lie on the Cytoplasmic side of the membrane. The chain crosses the membrane as a helical span at residues 129–148 (NRGLAFFVGYGVTLSMAYRL). Over 149–155 (LRSRLYL) the chain is Lumenal.

The protein belongs to the MAPEG family. In terms of assembly, homotrimer; The trimer binds only one molecule of glutathione. Acetylation of Lys-42 and Lys-55 is observed in liver mitochondria from fasted mice but not from fed mice. In terms of tissue distribution, expressed in the testes (at protein level).

Its subcellular location is the endoplasmic reticulum membrane. The protein resides in the mitochondrion outer membrane. It carries out the reaction RX + glutathione = an S-substituted glutathione + a halide anion + H(+). In terms of biological role, conjugation of reduced glutathione to a wide number of exogenous and endogenous hydrophobic electrophiles. This is Microsomal glutathione S-transferase 1 (Mgst1) from Mus musculus (Mouse).